We begin with the raw amino-acid sequence, 253 residues long: Sulfate transporter CysZ (253 aa).

4 helical membrane-spanning segments follow: residues 31-51 (FVIL…WWLF), 75-95 (LLWP…FSTI), 151-171 (IVLL…PVLW), and 222-242 (IPLL…AMWV).

This sequence belongs to the CysZ family.

Its subcellular location is the cell inner membrane. High affinity, high specificity proton-dependent sulfate transporter, which mediates sulfate uptake. Provides the sulfur source for the cysteine synthesis pathway. This chain is Sulfate transporter CysZ, found in Escherichia coli O127:H6 (strain E2348/69 / EPEC).